The chain runs to 207 residues: Outer-membrane lipoprotein LolB (207 aa).

Positions 1–21 (MTLPDFRLIRLLPLASLVLTA) are cleaved as a signal peptide. A lipid anchor (N-palmitoyl cysteine) is attached at Cys22. Cys22 carries S-diacylglycerol cysteine lipidation.

The protein belongs to the LolB family. In terms of assembly, monomer.

The protein localises to the cell outer membrane. Its function is as follows. Plays a critical role in the incorporation of lipoproteins in the outer membrane after they are released by the LolA protein. The sequence is that of Outer-membrane lipoprotein LolB from Salmonella agona (strain SL483).